A 564-amino-acid chain; its full sequence is Potassium-transporting ATPase potassium-binding subunit (564 aa).

10 helical membrane-spanning segments follow: residues 4–24 (YDYL…PWLG), 67–87 (TLAL…VLLL), 135–155 (IGLT…LVAL), 179–199 (LYGL…QGVP), 258–278 (FEVA…GHYV), 286–306 (AIIA…LWSE), 382–402 (AGLY…GLMI), 420–440 (LLVA…AIAA), 487–507 (VMIG…VLAL), and 534–554 (LLLL…LALG).

It belongs to the KdpA family. As to quaternary structure, the system is composed of three essential subunits: KdpA, KdpB and KdpC.

It localises to the cell inner membrane. Its function is as follows. Part of the high-affinity ATP-driven potassium transport (or Kdp) system, which catalyzes the hydrolysis of ATP coupled with the electrogenic transport of potassium into the cytoplasm. This subunit binds the periplasmic potassium ions and delivers the ions to the membrane domain of KdpB through an intramembrane tunnel. This chain is Potassium-transporting ATPase potassium-binding subunit, found in Pseudomonas entomophila (strain L48).